Here is a 226-residue protein sequence, read N- to C-terminus: MGIRAIVVDTAGTTTDLTFIQDVLFPYSVKALPDFLAQNQHNVLVENCICDTRDIALEPDANLARVTEILQQWVHEDRKATPLKTLQGLIWKQGYAHGEFTGHIFPDFIEAVNRFSAQKLRIYSFSSGSVEAQKLLFSHSDGGDLTEMFSGHFDTRTGNKLDKQAYANILNTISLSPKQVLFVSDVVEELKAAEAAGMMTCQMVRDSKQRTGDYRTINSFDELVID.

The protein belongs to the HAD-like hydrolase superfamily. MasA/MtnC family. As to quaternary structure, monomer. It depends on Mg(2+) as a cofactor.

It carries out the reaction 5-methylsulfanyl-2,3-dioxopentyl phosphate + H2O = 1,2-dihydroxy-5-(methylsulfanyl)pent-1-en-3-one + phosphate. It participates in amino-acid biosynthesis; L-methionine biosynthesis via salvage pathway; L-methionine from S-methyl-5-thio-alpha-D-ribose 1-phosphate: step 3/6. The protein operates within amino-acid biosynthesis; L-methionine biosynthesis via salvage pathway; L-methionine from S-methyl-5-thio-alpha-D-ribose 1-phosphate: step 4/6. Its function is as follows. Bifunctional enzyme that catalyzes the enolization of 2,3-diketo-5-methylthiopentyl-1-phosphate (DK-MTP-1-P) into the intermediate 2-hydroxy-3-keto-5-methylthiopentenyl-1-phosphate (HK-MTPenyl-1-P), which is then dephosphorylated to form the acireductone 1,2-dihydroxy-3-keto-5-methylthiopentene (DHK-MTPene). This is Enolase-phosphatase E1 from Shewanella sp. (strain ANA-3).